The following is a 196-amino-acid chain: UPF0056 membrane protein BU449 (196 aa).

6 consecutive transmembrane segments (helical) span residues 8–28 (TILL…MTIL), 45–65 (IIAL…LIIL), 71–91 (TVSI…IFPS), 105–125 (FLVP…TLML), 134–154 (MFYL…ILLS), and 174–194 (MGLV…RAWF).

It belongs to the UPF0056 (MarC) family.

The protein resides in the cell membrane. This chain is UPF0056 membrane protein BU449, found in Buchnera aphidicola subsp. Acyrthosiphon pisum (strain APS) (Acyrthosiphon pisum symbiotic bacterium).